A 181-amino-acid chain; its full sequence is Proteinase inhibitor A (181 aa).

The signal sequence occupies residues 1–24 (MAASNALLLISGVLLISLAVLCHG). Cystine bridges form between cysteine 67–cysteine 113, cysteine 134–cysteine 143, and cysteine 136–cysteine 139.

This sequence belongs to the protease inhibitor I3 (leguminous Kunitz-type inhibitor) family.

It is found in the secreted. Its function is as follows. Possesses two reactive sites. Inhibits an equimolar amount of trypsin and chymotrypsin simultaneously, and inhibits kallikrein weakly. The protein is Proteinase inhibitor A of Sagittaria sagittifolia (Arrowhead).